A 559-amino-acid chain; its full sequence is Suppressor of tumorigenicity 7 protein-like (559 aa).

The next 3 helical transmembrane spans lie at 39–59, 83–103, and 513–533; these read GLAN…LYAL, FYVA…IFEW, and LPFF…IALL.

The protein belongs to the ST7 family.

It localises to the membrane. The chain is Suppressor of tumorigenicity 7 protein-like (St7l) from Rattus norvegicus (Rat).